A 536-amino-acid polypeptide reads, in one-letter code: Glycine--tRNA ligase (536 aa).

The tract at residues 56–67 (LVSPAGAPSTFE) is insert. The substrate site is built by arginine 106 and glutamate 213. Residues 245–247 (RNE), 255–260 (FRSREF), and 333–334 (EL) contribute to the ATP site. A substrate-binding site is contributed by 260–264 (FEQME). Residues 350–372 (EGKLDPATNPMTVELNEHGKPKH) are insert. 396 to 400 (EPSAG) contacts substrate. Residue 400–403 (GADR) participates in ATP binding.

The protein belongs to the class-II aminoacyl-tRNA synthetase family. As to quaternary structure, homodimer.

Its subcellular location is the cytoplasm. The enzyme catalyses tRNA(Gly) + glycine + ATP = glycyl-tRNA(Gly) + AMP + diphosphate. Catalyzes the attachment of glycine to tRNA(Gly). This is Glycine--tRNA ligase from Rhodopirellula baltica (strain DSM 10527 / NCIMB 13988 / SH1).